A 73-amino-acid chain; its full sequence is Large ribosomal subunit protein bL31 (73 aa).

Belongs to the bacterial ribosomal protein bL31 family. Type A subfamily. Part of the 50S ribosomal subunit.

In terms of biological role, binds the 23S rRNA. The protein is Large ribosomal subunit protein bL31 of Bartonella tribocorum (strain CIP 105476 / IBS 506).